Consider the following 454-residue polypeptide: MALQLGRLSSGPCWLVARGGCGGPRAWSQCGGGGLRAWSQRSAAGRVCRPPGPAGTEQSRGLGHGSTSRGGPWVGTGLAAALAGLVGLATAAFGHVQRAEMLPKTSGTRATSLGRPEEEEDELAHRCSSFMAPPVTDLGELRRRPGDMKTKMELLILETQAQVCQALAQVDGGANFSVDRWERKEGGGGISCVLQDGCVFEKAGVSISVVHGNLSEEAAKQMRSRGKVLKTKDGKLPFCAMGVSSVIHPKNPHAPTIHFNYRYFEVEEADGNKQWWFGGGCDLTPTYLNQEDAVHFHRTLKEACDQHGPDLYPKFKKWCDDYFFIAHRGERRGIGGIFFDDLDSPSKEEVFRFVQSCARAVVPSYIPLVKKHCDDSFTPQEKLWQQLRRGRYVEFNLLYDRGTKFGLFTPGSRIESILMSLPLTARWEYMHSPSENSKEAEILEVLRHPRDWVR.

A mitochondrion-targeting transit peptide spans 1 to 110; it reads MALQLGRLSS…MLPKTSGTRA (110 aa). Positions 43–70 are disordered; the sequence is AAGRVCRPPGPAGTEQSRGLGHGSTSRG. Phosphoserine is present on Ser112. Residues 193 to 202 form an important for dimerization region; that stretch reads VLQDGCVFEK. Ser244 lines the coproporphyrinogen III pocket. His258 (proton donor) is an active-site residue. A coproporphyrinogen III-binding site is contributed by 260 to 262; it reads NYR. Residues 392–428 are important for dimerization; the sequence is YVEFNLLYDRGTKFGLFTPGSRIESILMSLPLTARWE. At Lys404 the chain carries N6-acetyllysine; alternate. An N6-succinyllysine; alternate modification is found at Lys404. 411–413 is a binding site for coproporphyrinogen III; sequence GSR.

The protein belongs to the aerobic coproporphyrinogen-III oxidase family. Homodimer.

The protein localises to the mitochondrion intermembrane space. The catalysed reaction is coproporphyrinogen III + O2 + 2 H(+) = protoporphyrinogen IX + 2 CO2 + 2 H2O. The protein operates within porphyrin-containing compound metabolism; protoporphyrin-IX biosynthesis; protoporphyrinogen-IX from coproporphyrinogen-III (O2 route): step 1/1. Catalyzes the aerobic oxidative decarboxylation of propionate groups of rings A and B of coproporphyrinogen-III to yield the vinyl groups in protoporphyrinogen-IX and participates to the sixth step in the heme biosynthetic pathway. The chain is Oxygen-dependent coproporphyrinogen-III oxidase, mitochondrial from Homo sapiens (Human).